Here is a 316-residue protein sequence, read N- to C-terminus: Cytochrome c biogenesis protein CcsA (316 aa).

7 helical membrane passes run 15–35 (FSICSIVITIRLINLVVTTIL), 44–64 (GIITTFLCLTGFLVTRWIYSG), 71–91 (LYESLIFLSWSFSLIHIVAYL), 142–162 (MILSYAALLCGSLLSAALLVI), 220–240 (VISLGFIFLTMGILSGAVWAN), 247–267 (WSWDPKETWAFITWIIFAIYL), and 281–301 (AIVAVIGFLIIWICYFGVNLL).

This sequence belongs to the CcmF/CycK/Ccl1/NrfE/CcsA family. May interact with Ccs1.

It is found in the plastid. It localises to the chloroplast thylakoid membrane. Functionally, required during biogenesis of c-type cytochromes (cytochrome c6 and cytochrome f) at the step of heme attachment. The protein is Cytochrome c biogenesis protein CcsA of Trachelium caeruleum (Blue throatwort).